A 75-amino-acid chain; its full sequence is DNA-directed RNA polymerase subunit omega (75 aa).

Belongs to the RNA polymerase subunit omega family. In cyanobacteria the RNAP catalytic core is composed of 2 alpha, 1 beta, 1 beta', 1 gamma and 1 omega subunit. When a sigma factor is associated with the core the holoenzyme is formed, which can initiate transcription.

It catalyses the reaction RNA(n) + a ribonucleoside 5'-triphosphate = RNA(n+1) + diphosphate. Functionally, promotes RNA polymerase assembly. Latches the N- and C-terminal regions of the beta' subunit thereby facilitating its interaction with the beta and alpha subunits. This Synechococcus sp. (strain CC9311) protein is DNA-directed RNA polymerase subunit omega.